Here is a 203-residue protein sequence, read N- to C-terminus: ATP-dependent Clp protease proteolytic subunit (203 aa).

The Nucleophile role is filled by Ser-101. The active site involves His-126.

Belongs to the peptidase S14 family. In terms of assembly, component of the chloroplastic Clp protease core complex.

It is found in the plastid. The protein localises to the chloroplast stroma. It carries out the reaction Hydrolysis of proteins to small peptides in the presence of ATP and magnesium. alpha-casein is the usual test substrate. In the absence of ATP, only oligopeptides shorter than five residues are hydrolyzed (such as succinyl-Leu-Tyr-|-NHMec, and Leu-Tyr-Leu-|-Tyr-Trp, in which cleavage of the -Tyr-|-Leu- and -Tyr-|-Trp bonds also occurs).. Functionally, cleaves peptides in various proteins in a process that requires ATP hydrolysis. Has a chymotrypsin-like activity. Plays a major role in the degradation of misfolded proteins. This Marchantia polymorpha (Common liverwort) protein is ATP-dependent Clp protease proteolytic subunit.